Reading from the N-terminus, the 498-residue chain is MKINPTTSGSGVSTLEKKNMGRIVQIIGPVLDVAFPAGKMPNIYNALVVKGRDTVGQPINVTCEVQQLLGNNRVRAVAMSSTDGLTRGMEVIDTGAPLSVPVGGATLGRIFNVLGEPVDNLGAVDTRTTSPIHRSAPAFIQLDTKLSIFETGIKVVDLLAPYRRGGKIGLFGGAGVGKTVLIMELINNIAKAHGGVSVFGGVGERTREGNDLYMEMKESGVINKENIAESKVALVYGQMNEPPGARMRVGLTALTMAEYFRDVNEQDVLLFIDNIFRFVQAGSEVSALLGRMPSAVGYQPTLSTEMGSLQERITSTKEGSITSIQAVYVPADDLTDPAPATTFAHLDATTVLSRGLAAKGIYPAVDPLDSTSTMLQPRIVGEEHYETAQRVKQTLQRYKELQDIIAILGLDELSEEDRLTVARARKIERFLSQPFFVAEVFTGSPGKYVGLAETIRGFQLILSGELDSLPEQAFYLVGNIDEATAKAMNLEMENNLKK.

Residue 172-179 (GGAGVGKT) coordinates ATP.

This sequence belongs to the ATPase alpha/beta chains family. As to quaternary structure, F-type ATPases have 2 components, CF(1) - the catalytic core - and CF(0) - the membrane proton channel. CF(1) has five subunits: alpha(3), beta(3), gamma(1), delta(1), epsilon(1). CF(0) has four main subunits: a(1), b(1), b'(1) and c(9-12).

It is found in the plastid. It localises to the chloroplast thylakoid membrane. It catalyses the reaction ATP + H2O + 4 H(+)(in) = ADP + phosphate + 5 H(+)(out). In terms of biological role, produces ATP from ADP in the presence of a proton gradient across the membrane. The catalytic sites are hosted primarily by the beta subunits. This is ATP synthase subunit beta, chloroplastic from Coffea arabica (Arabian coffee).